The following is a 184-amino-acid chain: Large ribosomal subunit protein uL15 (184 aa).

Residues 1–62 (MDLSSLRPAK…QMPMYRRLPK (62 aa)) are disordered. A compositionally biased stretch (gly residues) spans 21–35 (RGPGSGNGTTAGKGN).

It belongs to the universal ribosomal protein uL15 family. As to quaternary structure, part of the 50S ribosomal subunit.

In terms of biological role, binds to the 23S rRNA. The sequence is that of Large ribosomal subunit protein uL15 from Chlorobaculum parvum (strain DSM 263 / NCIMB 8327) (Chlorobium vibrioforme subsp. thiosulfatophilum).